Here is a 255-residue protein sequence, read N- to C-terminus: MRLRHLSDPDSLPALDKSFAIERPALGLAPDAPPVRILLLYGSLRARSFSRLAVEEAARLLQFFGAETRIFDPSDLPLPDQVQSDDHPAVKELRALSEWSEGQVWCSPERHGQITSVMKAQIDHLPLEMAGIRPTQGRTLAVMQVSGGSQSFNAVNTLRLLGRWMRMFTIPNQSSIAKAFQEFDAAGRMKPSPYYDRIADVMEELVRFTALVRPHREALTDRYSERKAAGHVIDEATDLSSIAIAPQPLPESETS.

43–50 (SLRARSFS) serves as a coordination point for FMN.

This sequence belongs to the ArsH family. In terms of assembly, homotetramer. FMN is required as a cofactor.

Has NADPH-dependent FMN reductase activity and very low azoreductase activity. No activity with NADH. The polypeptide is NADPH-dependent FMN reductase ArsH (Shigella flexneri).